A 273-amino-acid chain; its full sequence is Formamidopyrimidine-DNA glycosylase (273 aa).

Residue Pro-2 is the Schiff-base intermediate with DNA of the active site. Glu-3 functions as the Proton donor in the catalytic mechanism. The active-site Proton donor; for beta-elimination activity is Lys-58. 3 residues coordinate DNA: His-91, Arg-109, and Arg-154. The FPG-type zinc finger occupies 239–273 (FCYARTGEPCRICKTPIRQIVQGQRSTFYCPNCQK). Arg-263 acts as the Proton donor; for delta-elimination activity in catalysis.

It belongs to the FPG family. Monomer. The cofactor is Zn(2+).

It catalyses the reaction Hydrolysis of DNA containing ring-opened 7-methylguanine residues, releasing 2,6-diamino-4-hydroxy-5-(N-methyl)formamidopyrimidine.. It carries out the reaction 2'-deoxyribonucleotide-(2'-deoxyribose 5'-phosphate)-2'-deoxyribonucleotide-DNA = a 3'-end 2'-deoxyribonucleotide-(2,3-dehydro-2,3-deoxyribose 5'-phosphate)-DNA + a 5'-end 5'-phospho-2'-deoxyribonucleoside-DNA + H(+). In terms of biological role, involved in base excision repair of DNA damaged by oxidation or by mutagenic agents. Acts as a DNA glycosylase that recognizes and removes damaged bases. Has a preference for oxidized purines, such as 7,8-dihydro-8-oxoguanine (8-oxoG). Has AP (apurinic/apyrimidinic) lyase activity and introduces nicks in the DNA strand. Cleaves the DNA backbone by beta-delta elimination to generate a single-strand break at the site of the removed base with both 3'- and 5'-phosphates. This chain is Formamidopyrimidine-DNA glycosylase, found in Janthinobacterium sp. (strain Marseille) (Minibacterium massiliensis).